The chain runs to 433 residues: Protein CLP1 homolog (433 aa).

ATP is bound by residues Glu22, Arg61, and 128 to 133 (DVGKTT).

Belongs to the Clp1 family. Clp1 subfamily.

It is found in the nucleus. Required for endonucleolytic cleavage during polyadenylation-dependent pre-mRNA 3'-end formation. This Brugia malayi (Filarial nematode worm) protein is Protein CLP1 homolog.